We begin with the raw amino-acid sequence, 232 residues long: Very-long-chain (3R)-3-hydroxyacyl-CoA dehydratase 4 (232 aa).

Over Met1–Tyr19 the chain is Cytoplasmic. Residues Leu20–Val40 form a helical membrane-spanning segment. Residues Arg41 to Ala56 are Lumenal-facing. A helical membrane pass occupies residues Ile57 to Val77. The Cytoplasmic segment spans residues Gly78–Tyr112. Residues Val113–Met133 form a helical membrane-spanning segment. Over Leu134–Ser135 the chain is Lumenal. The helical transmembrane segment at Val136 to Tyr156 threads the bilayer. Tyr156 is an active-site residue. A topological domain (cytoplasmic) is located at residue Pro157. Residues Leu158–Gly178 traverse the membrane as a helical segment. Residue Glu163 is part of the active site. Residues Thr179–Ser189 are Lumenal-facing. Residues Ile190 to Thr210 traverse the membrane as a helical segment. Residues Tyr211–Met232 lie on the Cytoplasmic side of the membrane.

This sequence belongs to the very long-chain fatty acids dehydratase HACD family. In terms of assembly, may interact with enzymes of the ELO family (including ELOVL1); with those enzymes that mediate condensation, the first of the four steps of the reaction cycle responsible for fatty acids elongation, may be part of a larger fatty acids elongase complex. As to expression, highly expressed in leukocytes, and low expression in heart, spleen, kidney, and placenta.

Its subcellular location is the endoplasmic reticulum membrane. It carries out the reaction a very-long-chain (3R)-3-hydroxyacyl-CoA = a very-long-chain (2E)-enoyl-CoA + H2O. The catalysed reaction is (3R)-hydroxyhexadecanoyl-CoA = (2E)-hexadecenoyl-CoA + H2O. It functions in the pathway lipid metabolism; fatty acid biosynthesis. Functionally, catalyzes the third of the four reactions of the long-chain fatty acids elongation cycle. This endoplasmic reticulum-bound enzymatic process, allows the addition of two carbons to the chain of long- and very long-chain fatty acids/VLCFAs per cycle. This enzyme catalyzes the dehydration of the 3-hydroxyacyl-CoA intermediate into trans-2,3-enoyl-CoA, within each cycle of fatty acid elongation. Thereby, it participates in the production of VLCFAs of different chain lengths that are involved in multiple biological processes as precursors of membrane lipids and lipid mediators. This chain is Very-long-chain (3R)-3-hydroxyacyl-CoA dehydratase 4, found in Homo sapiens (Human).